A 1032-amino-acid polypeptide reads, in one-letter code: ATPase MORC2 (1032 aa).

Ala-2 is subject to N-acetylalanine. ATP-binding positions include Asn-39, 87–89 (SAK), and 99–105 (QYGNGLK). Asn-39 contacts Mg(2+). The stretch at 282 to 362 (SRFKTRAEQE…KEAKQRALKE (81 aa)) forms a coiled coil. Lys-427 provides a ligand contact to ATP. The segment at 490–544 (AMEIPTTIQCDLCLKWRTLPFQLSSVEKDYPDTWVCSMNPDPEQDRCEASEQKQK) adopts a CW-type zinc-finger fold. Zn(2+) is bound by residues Cys-499, Cys-502, Cys-525, and Cys-536. Disordered regions lie at residues 530-563 (DPEQ…KQKQ) and 577-793 (ALQK…RAQK). Basic and acidic residues-rich tracts occupy residues 532–543 (EQDRCEASEQKQ) and 550–563 (FRKD…KQKQ). A coiled-coil region spans residues 547–584 (LGTFRKDMKTQEEKQKQLTEKIRQQQEKLEALQKTTPI). Thr-582 is subject to Phosphothreonine. A phosphoserine mark is found at Ser-602 and Ser-615. Positions 627 to 638 (SRPPSLPTPRPA) are enriched in pro residues. Residue Lys-652 forms a Glycyl lysine isopeptide (Lys-Gly) (interchain with G-Cter in SUMO2) linkage. The segment covering 690–704 (PLVQQLSPSLLPNSK) has biased composition (low complexity). Ser-696 carries the post-translational modification Phosphoserine. Residue Lys-704 forms a Glycyl lysine isopeptide (Lys-Gly) (interchain with G-Cter in SUMO2) linkage. Phosphoserine is present on Ser-705. Low complexity predominate over residues 711-720 (SPKVIKTPVV). Lys-716 is covalently cross-linked (Glycyl lysine isopeptide (Lys-Gly) (interchain with G-Cter in SUMO2)). Phosphoserine occurs at positions 725 and 730. Thr-733 carries the post-translational modification Phosphothreonine. Phosphoserine; by PAK1 is present on Ser-739. Residues 741 to 761 (AVSDEEEVEEEAERRKERCKR) adopt a coiled-coil conformation. Position 743 is a phosphoserine (Ser-743). The span at 765–774 (VVKEEKKDSN) shows a compositional bias: basic and acidic residues. A Glycyl lysine isopeptide (Lys-Gly) (interchain with G-Cter in SUMO2) cross-link involves residue Lys-767. Phosphoserine occurs at positions 777 and 779. Residue Lys-819 forms a Glycyl lysine isopeptide (Lys-Gly) (interchain with G-Cter in SUMO2) linkage. A disordered region spans residues 850-870 (RLMKPPSPEHQSLDTQQEGGE). Lys-932 participates in a covalent cross-link: Glycyl lysine isopeptide (Lys-Gly) (interchain with G-Cter in SUMO2). Residues 966-1016 (QSRADSRAKASEESLRTSERKLRETEEKLQKLRTNIVALLQKVQEDIDINT) adopt a coiled-coil conformation.

In terms of assembly, homodimerizes upon ATP-binding and dissociate upon ATP hydrolysis; homodimerization is required for gene silencing. Interacts with HDAC4. Interacts with ACLY. Interacts with TASOR and MPHOSPH8; the interactions associate MORC2 with the HUSH complex which recruits MORC2 to heterochromatic loci. Post-translationally, phosphorylated by PAK1 at Ser-739 upon DNA damage. Phosphorylation is required for ATPase activity and recruitment to damaged chromatin. In terms of tissue distribution, highly expressed in smooth muscle, pancreas and testis.

The protein resides in the nucleus. It localises to the cytoplasm. The protein localises to the cytosol. Its subcellular location is the chromosome. It is found in the nucleus matrix. The enzyme catalyses ATP + H2O = ADP + phosphate + H(+). With respect to regulation, ATPase activity is dependent of phosphorylation by PAK1 and presence of DNA. Essential for epigenetic silencing by the HUSH (human silencing hub) complex. Recruited by HUSH to target site in heterochromatin, the ATPase activity and homodimerization are critical for HUSH-mediated silencing. Represses germ cell-related genes and L1 retrotransposons in collaboration with SETDB1 and the HUSH complex, the silencing is dependent of repressive epigenetic modifications, such as H3K9me3 mark. Silencing events often occur within introns of transcriptionally active genes, and lead to the down-regulation of host gene expression. During DNA damage response, regulates chromatin remodeling through ATP hydrolysis. Upon DNA damage, is phosphorylated by PAK1, both colocalize to chromatin and induce H2AX expression. ATPase activity is required and dependent of phosphorylation by PAK1 and presence of DNA. Recruits histone deacetylases, such as HDAC4, to promoter regions, causing local histone H3 deacetylation and transcriptional repression of genes such as CA9. Exhibits a cytosolic function in lipogenesis, adipogenic differentiation, and lipid homeostasis by increasing the activity of ACLY, possibly preventing its dephosphorylation. The protein is ATPase MORC2 of Homo sapiens (Human).